Consider the following 243-residue polypeptide: L-fucose operon activator (243 aa).

The region spanning 1–57 (MKAARQQAIVDLLLNHTSLTTEALSEQLKVSKETIRRDLNELQTQGKILRNHGRAKY) is the HTH deoR-type domain. The H-T-H motif DNA-binding region spans 19–38 (LTTEALSEQLKVSKETIRRD).

Transcriptional activator of the fuc operon. The sequence is that of L-fucose operon activator (fucR) from Escherichia coli (strain K12).